Reading from the N-terminus, the 429-residue chain is MLNLAQLQSQTRELLAALKQLTEHCPSAVDGTTEGMIPGLSPWSTTGESGEATRARETVLKCLAKLQVSLAGPIDVLQHMASQTQLLACLQWLGEFQVPACIPLDGSASIKDVAELIGVPENHICRIVRMAITAGFLQEPELGHVAHSPLSAAFVTNPSYLDAAMFLARITTPAALNMPSITRQRTAGMCERVNQVEQNNNIINMVTSSTLDETALPRLERQWYAYLRFGTGNLCDTATDIISCLNSFQGTSATVVEVGARSLDRAMTLANRYPTLRFIIQIHLPSSASGSGKDEAKYDRTRAIRSHSQITVQYRTPGTPQQIQDAAVYIINFPLPFPGVSSCSISAQLETELRAHLQALRLSPAATLVLTAPALPERGARGTEVAVLTRIRDLSFLQLANDREPEISELINLLNGVGDSEGRFVVVKK.

Positions 80–144 (MASQTQLLAC…GFLQEPELGH (65 aa)) constitute an HTH iclR-type domain. The H-T-H motif DNA-binding region spans 110 to 129 (IKDVAELIGVPENHICRIVR).

Its subcellular location is the nucleus. Transcriptional coactivator; part of the gene cluster that mediates the biosynthesis of the tetrahydroxanthone dimer secalonic acid D. The polypeptide is Transcriptional coactivator AacuS (Aspergillus aculeatus (strain ATCC 16872 / CBS 172.66 / WB 5094)).